The chain runs to 296 residues: Cytidine deaminase (296 aa).

CMP/dCMP-type deaminase domains follow at residues 47-167 and 186-296; these read DSHE…FGPA and ESDD…VDPV. Residue 88–90 coordinates substrate; sequence NLE. His101 provides a ligand contact to Zn(2+). The active-site Proton donor is the Glu103. Residues Cys128 and Cys131 each coordinate Zn(2+).

This sequence belongs to the cytidine and deoxycytidylate deaminase family. As to quaternary structure, homodimer. The cofactor is Zn(2+).

It catalyses the reaction cytidine + H2O + H(+) = uridine + NH4(+). The enzyme catalyses 2'-deoxycytidine + H2O + H(+) = 2'-deoxyuridine + NH4(+). This enzyme scavenges exogenous and endogenous cytidine and 2'-deoxycytidine for UMP synthesis. The polypeptide is Cytidine deaminase (Shewanella amazonensis (strain ATCC BAA-1098 / SB2B)).